The sequence spans 200 residues: Thymidine kinase (200 aa).

ATP-binding positions include 9-16 (STMNAGKS) and 88-91 (DEAH). The active-site Proton acceptor is glutamate 89. Positions 146, 148, 183, and 186 each coordinate Zn(2+).

The protein belongs to the thymidine kinase family. In terms of assembly, homotetramer.

The protein resides in the cytoplasm. The enzyme catalyses thymidine + ATP = dTMP + ADP + H(+). The protein is Thymidine kinase of Rhizobium etli (strain ATCC 51251 / DSM 11541 / JCM 21823 / NBRC 15573 / CFN 42).